The following is a 297-amino-acid chain: MGNIFHTPVLLDEIINLLEIVYVNDGFIFVDCTLGEGGHSSAVLRKYQNISVIGIERDDIILNRAKEFLVEFKGKVSYFNAWFDDFFSEYSLSSKANFILADLGISMFHYKMSGRGFSFFEDERLDMRLNPGAGGLSAYDIVNTFDKVRLENLIYEFGGEHYSKRIVSSILEYRKIKKIKTSRELQGIISKAYPRIKLKINPATKTFQALRIYVNDELFRLKRSLPLWVGSLSRNGILAIITFHSLEDKIVKEFFKGLSKEQYCILTKKPIIASFEEKRCNNASRSAKLRAIRKLYE.

S-adenosyl-L-methionine-binding positions include 37 to 39 (GGH), glutamate 56, phenylalanine 87, aspartate 102, and histidine 109.

This sequence belongs to the methyltransferase superfamily. RsmH family.

It is found in the cytoplasm. The catalysed reaction is cytidine(1402) in 16S rRNA + S-adenosyl-L-methionine = N(4)-methylcytidine(1402) in 16S rRNA + S-adenosyl-L-homocysteine + H(+). Its function is as follows. Specifically methylates the N4 position of cytidine in position 1402 (C1402) of 16S rRNA. This chain is Ribosomal RNA small subunit methyltransferase H, found in Borrelia hermsii (strain HS1 / DAH).